The sequence spans 571 residues: Sulfite reductase [NADPH] hemoprotein beta-component (571 aa).

[4Fe-4S] cluster-binding residues include Cys-435, Cys-441, Cys-480, and Cys-484. Cys-484 serves as a coordination point for siroheme.

The protein belongs to the nitrite and sulfite reductase 4Fe-4S domain family. As to quaternary structure, alpha(8)-beta(8). The alpha component is a flavoprotein, the beta component is a hemoprotein. The cofactor is siroheme. It depends on [4Fe-4S] cluster as a cofactor.

It catalyses the reaction hydrogen sulfide + 3 NADP(+) + 3 H2O = sulfite + 3 NADPH + 4 H(+). Its pathway is sulfur metabolism; hydrogen sulfide biosynthesis; hydrogen sulfide from sulfite (NADPH route): step 1/1. Functionally, component of the sulfite reductase complex that catalyzes the 6-electron reduction of sulfite to sulfide. This is one of several activities required for the biosynthesis of L-cysteine from sulfate. The chain is Sulfite reductase [NADPH] hemoprotein beta-component from Erwinia tasmaniensis (strain DSM 17950 / CFBP 7177 / CIP 109463 / NCPPB 4357 / Et1/99).